A 285-amino-acid chain; its full sequence is Ribosomal RNA small subunit methyltransferase A (285 aa).

Residues N29, L31, G56, E77, D102, and N123 each coordinate S-adenosyl-L-methionine.

This sequence belongs to the class I-like SAM-binding methyltransferase superfamily. rRNA adenine N(6)-methyltransferase family. RsmA subfamily.

The protein resides in the cytoplasm. It carries out the reaction adenosine(1518)/adenosine(1519) in 16S rRNA + 4 S-adenosyl-L-methionine = N(6)-dimethyladenosine(1518)/N(6)-dimethyladenosine(1519) in 16S rRNA + 4 S-adenosyl-L-homocysteine + 4 H(+). In terms of biological role, specifically dimethylates two adjacent adenosines (A1518 and A1519) in the loop of a conserved hairpin near the 3'-end of 16S rRNA in the 30S particle. May play a critical role in biogenesis of 30S subunits. The chain is Ribosomal RNA small subunit methyltransferase A from Clostridium perfringens (strain ATCC 13124 / DSM 756 / JCM 1290 / NCIMB 6125 / NCTC 8237 / Type A).